The following is a 396-amino-acid chain: Obg-like ATPase 1 (396 aa).

One can recognise an OBG-type G domain in the interval 23-283; that stretch reads LKIGIVGLPN…LSAEERQKYL (261 aa). 32 to 37 is an ATP binding site; sequence NVGKST. Ser36 and Thr56 together coordinate Mg(2+). Leu231 is an ATP binding site. The Nuclear export signal motif lies at 267–274; that stretch reads LELKLQEL. At Lys294 the chain carries N6-acetyllysine. Residues 304–387 enclose the TGS domain; the sequence is QLEYFFTAGP…EDGDIIFFKF (84 aa).

It belongs to the TRAFAC class OBG-HflX-like GTPase superfamily. OBG GTPase family. YchF/OLA1 subfamily. In terms of assembly, monomer. The cofactor is Mg(2+).

The protein resides in the cytoplasm. It localises to the nucleus. The protein localises to the nucleolus. In terms of biological role, hydrolyzes ATP, and can also hydrolyze GTP with lower efficiency. Has lower affinity for GTP. This chain is Obg-like ATPase 1, found in Pongo abelii (Sumatran orangutan).